Reading from the N-terminus, the 1444-residue chain is Protein shortage in chiasmata 1 ortholog (1444 aa).

Low complexity predominate over residues 1106 to 1117 (SITKSPQISSPQ). Residues 1106-1129 (SITKSPQISSPQENRNQISTLSSQ) form a disordered region.

The protein belongs to the XPF family. Highly divergent. Interacts with TEX11. Interacts with SPO16.

It localises to the chromosome. Functionally, ATPase required during meiosis for the formation of crossover recombination intermediates. Binds DNA: preferentially binds to single-stranded DNA and DNA branched structures. Does not show nuclease activity in vitro, but shows ATPase activity, which is stimulated by the presence of single-stranded DNA. Plays a key role in homologous recombination and crossing-over in meiotic prophase I in male and female germ cells. Required for proper synaptonemal complex assembly and homologous chromosome pairing. Requiref for recruitment TEX11 and MSH4 to recombination intermediates. The polypeptide is Protein shortage in chiasmata 1 ortholog (Homo sapiens (Human)).